The chain runs to 809 residues: Leucine--tRNA ligase (809 aa).

A 'HIGH' region motif is present at residues 40–50 (PYPSGRIHMGH). The 'KMSKS' region signature appears at 579–583 (KMSKS). Residue Lys-582 coordinates ATP.

The protein belongs to the class-I aminoacyl-tRNA synthetase family.

The protein resides in the cytoplasm. It carries out the reaction tRNA(Leu) + L-leucine + ATP = L-leucyl-tRNA(Leu) + AMP + diphosphate. The protein is Leucine--tRNA ligase of Campylobacter jejuni subsp. doylei (strain ATCC BAA-1458 / RM4099 / 269.97).